The sequence spans 426 residues: Serine--tRNA ligase (426 aa).

The disordered stretch occupies residues 36–66 (KRKHLQERTQDLQSQRNTISKEIGQKKAKGE). The span at 46–55 (DLQSQRNTIS) shows a compositional bias: polar residues. 233–235 (TAE) is an L-serine binding site. Position 264 to 266 (264 to 266 (RSE)) interacts with ATP. L-serine is bound at residue Glu287. 351–354 (EISS) provides a ligand contact to ATP. Ser387 contributes to the L-serine binding site.

This sequence belongs to the class-II aminoacyl-tRNA synthetase family. Type-1 seryl-tRNA synthetase subfamily. In terms of assembly, homodimer. The tRNA molecule binds across the dimer.

It localises to the cytoplasm. It catalyses the reaction tRNA(Ser) + L-serine + ATP = L-seryl-tRNA(Ser) + AMP + diphosphate + H(+). The catalysed reaction is tRNA(Sec) + L-serine + ATP = L-seryl-tRNA(Sec) + AMP + diphosphate + H(+). The protein operates within aminoacyl-tRNA biosynthesis; selenocysteinyl-tRNA(Sec) biosynthesis; L-seryl-tRNA(Sec) from L-serine and tRNA(Sec): step 1/1. Its function is as follows. Catalyzes the attachment of serine to tRNA(Ser). Is also able to aminoacylate tRNA(Sec) with serine, to form the misacylated tRNA L-seryl-tRNA(Sec), which will be further converted into selenocysteinyl-tRNA(Sec). In Francisella tularensis subsp. holarctica (strain FTNF002-00 / FTA), this protein is Serine--tRNA ligase.